Consider the following 358-residue polypeptide: UDP-N-acetylglucosamine--N-acetylmuramyl-(pentapeptide) pyrophosphoryl-undecaprenol N-acetylglucosamine transferase (358 aa).

Residues 12-14 (TAG), Arg-165, Ser-195, and Gln-290 each bind UDP-N-acetyl-alpha-D-glucosamine.

This sequence belongs to the glycosyltransferase 28 family. MurG subfamily.

It is found in the cell membrane. The enzyme catalyses di-trans,octa-cis-undecaprenyl diphospho-N-acetyl-alpha-D-muramoyl-L-alanyl-D-glutamyl-meso-2,6-diaminopimeloyl-D-alanyl-D-alanine + UDP-N-acetyl-alpha-D-glucosamine = di-trans,octa-cis-undecaprenyl diphospho-[N-acetyl-alpha-D-glucosaminyl-(1-&gt;4)]-N-acetyl-alpha-D-muramoyl-L-alanyl-D-glutamyl-meso-2,6-diaminopimeloyl-D-alanyl-D-alanine + UDP + H(+). The protein operates within cell wall biogenesis; peptidoglycan biosynthesis. Its function is as follows. Cell wall formation. Catalyzes the transfer of a GlcNAc subunit on undecaprenyl-pyrophosphoryl-MurNAc-pentapeptide (lipid intermediate I) to form undecaprenyl-pyrophosphoryl-MurNAc-(pentapeptide)GlcNAc (lipid intermediate II). This chain is UDP-N-acetylglucosamine--N-acetylmuramyl-(pentapeptide) pyrophosphoryl-undecaprenol N-acetylglucosamine transferase, found in Clostridium tetani (strain Massachusetts / E88).